Consider the following 245-residue polypeptide: Myelin protein P0 (245 aa).

Residues 1 to 28 form the signal peptide; it reads MEPSGLRTPCSLLALVLLSALVLTPTLA. Residues 29–143 form the Ig-like V-type domain; the sequence is IEVYTDREVY…VGKSSYVHLQ (115 aa). The Extracellular segment spans residues 29–153; sequence IEVYTDREVY…VQEKGPARAG (125 aa). C49 and C125 are oxidised to a cystine. N-linked (GlcNAc...) asparagine glycosylation is present at N120. A helical transmembrane segment spans residues 154–174; it reads LILGIIIAVALALVIVVTILI. Residues 175 to 245 are Cytoplasmic-facing; that stretch reads LLIRYCWLRR…GIGDSRKDRK (71 aa). Basic and acidic residues-rich tracts occupy residues 199–208 and 224–245; these read KLHKAKDSSK and TRGK…KDRK. A disordered region spans residues 199–245; sequence KLHKAKDSSKRSSRQTPILYAMLDQTRGKSSEKKAKGGIGDSRKDRK.

Belongs to the myelin P0 protein family.

The protein resides in the cell membrane. Its function is as follows. Creation of an extracellular membrane face which guides the wrapping process and ultimately compacts adjacent lamellae. In Xenopus laevis (African clawed frog), this protein is Myelin protein P0 (mpz).